A 694-amino-acid chain; its full sequence is Soluble starch synthase 2-2, chloroplastic/amyloplastic (694 aa).

Residues 1–15 (MSGAIASSPAATLFL) constitute a chloroplast transit peptide. The tract at residues 93–197 (KADHVEDSVS…DSENKESGPL (105 aa)) is disordered. The span at 127-142 (APVSKPKVDPSVPASK) shows a compositional bias: low complexity. Positions 156-176 (AALDKKEDVGVAEPLEAKADA) are enriched in basic and acidic residues. Residues 177-186 (GGDAGAVSSA) show a composition bias toward low complexity. Lysine 217 is an ADP-alpha-D-glucose binding site.

Belongs to the glycosyltransferase 1 family. Bacterial/plant glycogen synthase subfamily. Expressed in leaves and weakly in endosperm and roots.

It is found in the plastid. It localises to the amyloplast. The protein resides in the chloroplast. It catalyses the reaction [(1-&gt;4)-alpha-D-glucosyl](n) + ADP-alpha-D-glucose = [(1-&gt;4)-alpha-D-glucosyl](n+1) + ADP + H(+). Its pathway is glycan biosynthesis; starch biosynthesis. May contribute to the deposition of transient starch in chloroplasts of leaves. In Oryza sativa subsp. japonica (Rice), this protein is Soluble starch synthase 2-2, chloroplastic/amyloplastic (SSII-2).